A 606-amino-acid polypeptide reads, in one-letter code: Putative amino acid transporter AAT1 (606 aa).

Positions 1–156 (MNKKYGTSSN…DEEGTNKPKR (156 aa)) are disordered. Basic and acidic residues-rich tracts occupy residues 12–25 (HDNKKDKKNNADKN) and 72–89 (SDKKNEKSDKNEKNESSK). A compositionally biased stretch (acidic residues) spans 140 to 149 (SDGDYTNDEE). Transmembrane regions (helical) follow at residues 175-194 (TVLFICTAIGVGFLSIPYVF), 200-225 (ILSIILIILNAFESYVTTNILCTSSL), 246-271 (TIIDFGLSFGFVSSYILILILISNFL), 283-301 (LFTNNVFLVILICLLILPI), 313-332 (FLIFSLFSLSITVLTIGLQT), 352-372 (HFFKCFNILLFSFSQQPNACF), 393-412 (VILQVIFYTLFGILGYFSFL), 428-449 (VSILLCKFLLSLTFFFSVPLNF), 522-539 (MWISVIVTIFCALIACKV), 545-567 (VIGIGGGITSTLISCLLPNLIYY), and 579-605 (RYSTLFMLCFFSFMGFLSVVVTTLNLI).

The protein belongs to the amino acid/polyamine transporter 2 family.

The protein resides in the vacuole membrane. In terms of biological role, putative amino acid transporter. Probably transports tryptophan. Involved in maintaining the osmotic homeostasis of the digestive vacuole. Important for the timely development and growth of the asexual-stage parasites and male gametocyte maturation. In Plasmodium falciparum (isolate 3D7), this protein is Putative amino acid transporter AAT1.